The sequence spans 178 residues: Large ribosomal subunit protein uL6 (178 aa).

This sequence belongs to the universal ribosomal protein uL6 family. As to quaternary structure, part of the 50S ribosomal subunit.

Its function is as follows. This protein binds to the 23S rRNA, and is important in its secondary structure. It is located near the subunit interface in the base of the L7/L12 stalk, and near the tRNA binding site of the peptidyltransferase center. The sequence is that of Large ribosomal subunit protein uL6 from Maridesulfovibrio salexigens (strain ATCC 14822 / DSM 2638 / NCIMB 8403 / VKM B-1763) (Desulfovibrio salexigens).